The following is a 220-amino-acid chain: Ribonuclease HII (220 aa).

The 189-residue stretch at 32 to 220 (KHIAGIDEAG…FAPIKGRFDC (189 aa)) folds into the RNase H type-2 domain. A divalent metal cation-binding residues include Asp-38, Glu-39, and Asp-130.

Belongs to the RNase HII family. Mn(2+) serves as cofactor. It depends on Mg(2+) as a cofactor.

It is found in the cytoplasm. It catalyses the reaction Endonucleolytic cleavage to 5'-phosphomonoester.. Functionally, endonuclease that specifically degrades the RNA of RNA-DNA hybrids. This Brucella suis (strain ATCC 23445 / NCTC 10510) protein is Ribonuclease HII.